A 418-amino-acid polypeptide reads, in one-letter code: Pentatricopeptide repeat-containing protein At2g18520, mitochondrial (418 aa).

The N-terminal 14 residues, 1 to 14 (MTSSRLYLRFLRRF), are a transit peptide targeting the mitochondrion. PPR repeat units follow at residues 101-135 (TETF…GTPR), 136-166 (TVVS…FPQR), 173-207 (DKIS…GVEV), 208-242 (TIIA…GCDL), 243-276 (DNTV…GLKP), 277-311 (DTVS…NAAT), 312-342 (FRTL…HKIP), and 343-373 (DFKT…VKKK).

The protein belongs to the PPR family. P subfamily.

The protein localises to the mitochondrion. This Arabidopsis thaliana (Mouse-ear cress) protein is Pentatricopeptide repeat-containing protein At2g18520, mitochondrial.